The following is a 282-amino-acid chain: Halorhodopsin (282 aa).

Residues 1-29 (MMETAADALASGTVPLEMTQTQIFEAIQG) lie on the Extracellular side of the membrane. A helical transmembrane segment spans residues 30–55 (DTLLASSLWINIALAGLSILLFVYMG). Over 56–61 (RNLEDP) the chain is Cytoplasmic. The chain crosses the membrane as a helical span at residues 62-85 (RAQLIFVATLMVPLVSISSYTGLV). Residues 86-109 (SGLTVSFLEMPAGHALAGQEVLTP) lie on the Extracellular side of the membrane. A helical transmembrane segment spans residues 110 to 131 (WGRYLTWALSTPMILVALGLLA). Topologically, residues 132-134 (GSN) are cytoplasmic. Residues 135–158 (ATKLFTAVTADIGMCVTGLAAALT) traverse the membrane as a helical segment. The Extracellular portion of the chain corresponds to 159–161 (TSS). Residues 162-184 (YLLRWVWYVISCAFFVVVLYVLL) traverse the membrane as a helical segment. The Cytoplasmic portion of the chain corresponds to 185–196 (AEWAEDAEVAGT). Residues 197 to 220 (AEIFNTLKLLTVVLWLGYPIFWAL) traverse the membrane as a helical segment. At 221 to 229 (GAEGLAVLD) the chain is on the extracellular side. The helical transmembrane segment at 230-258 (VAVTSWAYSGMDIVAKYLFAFLLLRWVVD) threads the bilayer. At lysine 245 the chain carries N6-(retinylidene)lysine. Over 259 to 282 (NERTVAGMAAGLGAPLARCAPADD) the chain is Cytoplasmic.

The protein belongs to the archaeal/bacterial/fungal opsin family.

Its subcellular location is the cell membrane. Its function is as follows. Light-driven chloride pump. The protein is Halorhodopsin (hop) of Halorubrum sodomense.